Here is a 245-residue protein sequence, read N- to C-terminus: NADH-quinone oxidoreductase subunit C (245 aa).

Residues 1 to 10 (MNAPQDRTDD) are compositionally biased toward basic and acidic residues. 2 disordered regions span residues 1-54 (MNAP…GYGG) and 217-245 (QRKDYPLGGVPVEYKGAEIPPPDRRRSYQ). The span at 11–28 (GGVPVPVTPAGATGGAPA) shows a compositional bias: low complexity. The segment covering 39-54 (GMFGDQGTGDVSGYGG) has biased composition (gly residues).

Belongs to the complex I 30 kDa subunit family. NDH-1 is composed of 14 different subunits. Subunits NuoB, C, D, E, F, and G constitute the peripheral sector of the complex.

The protein localises to the cell membrane. The enzyme catalyses a quinone + NADH + 5 H(+)(in) = a quinol + NAD(+) + 4 H(+)(out). Functionally, NDH-1 shuttles electrons from NADH, via FMN and iron-sulfur (Fe-S) centers, to quinones in the respiratory chain. The immediate electron acceptor for the enzyme in this species is believed to be a menaquinone. Couples the redox reaction to proton translocation (for every two electrons transferred, four hydrogen ions are translocated across the cytoplasmic membrane), and thus conserves the redox energy in a proton gradient. This chain is NADH-quinone oxidoreductase subunit C, found in Salinispora arenicola (strain CNS-205).